Here is a 654-residue protein sequence, read N- to C-terminus: MGKKGGTLKRSSKSTKTRKDIVEDQYDDEIDAFHKQRDIVPLDVNDDTDESDEDDVQPVFDLQGVDDESEEDEDTEDEEEAENGLTAKMIRQKKYLRAKFGDGDDEMADDDKDKEEDKRSTWGGRSGLYHSGDNVDFDILSSDDEDIKAEEEEVIRLRAEQLGSITAADAGLDDDSEEDSDRELTMEEISDKGKQATKSITDKKEKGDKDTHVEEIKKDINSLSKEEQMDVVYSSAPEIVGLLSELNDAVEELESKINPVMNKLKEGEISLNGLARYLEVKQLLLLTYCQSITFYLLLKSEGQPIRDHPVLARLVEIKSLLDKIKELDEELPPGFEESLARSIANGAVQKVVKEDQLTSPVSDSVDRITQDTAKPMKIDNAREEKKKKGEKRKHQNDLVDVQSEEMLKLRAALEGKLRTNGVLGSTVSKSDKAQKRQKLANRKLETFDDYVDDADNSTHNVTADKLTKLVSTKRKPKTISGDDDLPQRDDIGERRRKFELRVLAGAGVKSSEGDGRNKNGAFASDDEDDNDGDNNDMVDNDGESEDEFYKQVKQKQQAKRAAKAEIYSRKPHLMPSSPEHVDGKRHISNQMVSNRGLTRQRNRDLKNPRKKYRKNYEKKVTRRKGQVRDIRKQTGPYAGEARGINPNTSRSIRM.

The span at 1 to 16 (MGKKGGTLKRSSKSTK) shows a compositional bias: basic residues. 3 disordered regions span residues 1–23 (MGKK…DIVE), 35–145 (KQRD…SDDE), and 164–212 (SITA…KDTH). A Nuclear localization signal 1 motif is present at residues 2-9 (GKKGGTLK). Acidic residues-rich tracts occupy residues 44 to 56 (VNDD…EDDV), 64 to 82 (GVDD…EEAE), and 103 to 114 (GDDEMADDDKDK). The stretch at 140 to 160 (LSSDDEDIKAEEEEVIRLRAE) forms a coiled coil. Residues 171 to 181 (GLDDDSEEDSD) are compositionally biased toward acidic residues. Over residues 182 to 212 (RELTMEEISDKGKQATKSITDKKEKGDKDTH) the composition is skewed to basic and acidic residues. Residues 243–263 (LSELNDAVEELESKINPVMNK) adopt a coiled-coil conformation. Disordered regions lie at residues 362–397 (SDSV…HQND), 470–492 (VSTK…DDIG), and 509–654 (KSSE…SIRM). A compositionally biased stretch (basic and acidic residues) spans 364-387 (SVDRITQDTAKPMKIDNAREEKKK). Positions 524 to 546 (SDDEDDNDGDNNDMVDNDGESED) are enriched in acidic residues. Over residues 552–561 (VKQKQQAKRA) the composition is skewed to basic residues. Residues 588-599 (SNQMVSNRGLTR) are compositionally biased toward polar residues. The Nuclear localization signal 2 motif lies at 608 to 615 (PRKKYRKN). A compositionally biased stretch (polar residues) spans 645-654 (NPNTSRSIRM).

It belongs to the SAS10 family. Interacts with NUCL1, NUCL2, JMJ14, NOF1 and MPP10 in the nucleus. Mainly present in tissues undergoing rapid cellular growth and differentiation. Mostly expressed in shoots and flowers, and, to a lower extent, in leaves, siliques, roots and seedlings.

It is found in the nucleus. It localises to the nucleolus. Its function is as follows. Essential protein during embryogenesis. Involved both in gene transcription regulation and in processing events critical for proper rRNA biogenesis and nucleolar organization during reproduction; contributes to pre-rRNA processing at the 5' external transcribed spacer. Binds RNA. This chain is Protein THALLO, found in Arabidopsis thaliana (Mouse-ear cress).